A 200-amino-acid polypeptide reads, in one-letter code: Nitrile hydratase subunit alpha (200 aa).

Cys105, Cys108, Ser109, and Cys110 together coordinate Fe(3+). At Cys108 the chain carries Cysteine sulfinic acid (-SO2H). Cysteine sulfenic acid (-SOH) is present on Cys110.

It belongs to the nitrile hydratase subunit alpha family. As to quaternary structure, heterodimer of an alpha and a beta chain. Fe(3+) is required as a cofactor. In terms of processing, oxidation on Cys-108 is essential for the activity. Post-translationally, oxidation on Cys-110 stabilizes the Fe-NO ligand coordinated in the inactive form.

The catalysed reaction is an aliphatic primary amide = an aliphatic nitrile + H2O. Inactivated by oxidation of Cys-110 to a sulfenic acid. Its function is as follows. NHase catalyzes the hydration of various nitrile compounds to the corresponding amides. Industrial production of acrylamide is now being developed using some of the enzymes of this class. This is Nitrile hydratase subunit alpha (nthA) from Pseudomonas chlororaphis (Pseudomonas aureofaciens).